The sequence spans 151 residues: uncharacterized protein (151 aa).

The 138-residue stretch at 6-143 folds into the Nudix hydrolase domain; the sequence is MKTLSAGIIF…QWQYVMGPSL (138 aa).

This is an uncharacterized protein from Escherichia coli (Bacteriophage T4).